Reading from the N-terminus, the 36-residue chain is Zinc metalloproteinase-disintegrin-like VaH1 (36 aa).

The Peptidase M12B domain occupies 1 to 36 (MVTKYSSIFMSPILSNPPILYFSDCSREXYQKXLTN).

Belongs to the venom metalloproteinase (M12B) family. P-III subfamily. P-IIIa sub-subfamily. In terms of assembly, monomer. Zn(2+) serves as cofactor. Post-translationally, the N-terminus is blocked. In terms of processing, glycosylated. In terms of tissue distribution, expressed by the venom gland.

It localises to the secreted. Its activity is regulated as follows. Inhibited by EDTA, but not inhibited by iodoacetamide, PMSF and pepstatin A. In terms of biological role, snake venom zinc metalloprotease that exhibits strong hemorrhagic activity. It also degrades alpha-chain of fibrinogen (FGA), but not the beta- and the gamma-chains. Possesses potent azocaseinolytic activity and cleaves insulin B-chain, hydrolyzing it at positions Ala(14)-Leu(15), followed by Tyr(16)-Leu(17) and His(10)-Leu(11). In vivo, subcutaneous injection into mice induces strong hemorrhage. In Vipera ammodytes ammodytes (Western sand viper), this protein is Zinc metalloproteinase-disintegrin-like VaH1.